Reading from the N-terminus, the 379-residue chain is Cytochrome b (379 aa).

A run of 4 helical transmembrane segments spans residues 33–53 (FGSL…FLAM), 77–98 (WLIR…FIHV), 113–133 (WNIG…GYVL), and 178–198 (FFAF…VHLL). 2 residues coordinate heme b: His-83 and His-97. The heme b site is built by His-182 and His-196. His-201 is an a ubiquinone binding site. The next 4 membrane-spanning stretches (helical) occupy residues 226-246 (TKDL…ALFF), 288-308 (LGGV…PLLN), 320-340 (ITQV…WIGG), and 347-367 (XTMI…ILIP).

The protein belongs to the cytochrome b family. As to quaternary structure, the cytochrome bc1 complex contains 11 subunits: 3 respiratory subunits (MT-CYB, CYC1 and UQCRFS1), 2 core proteins (UQCRC1 and UQCRC2) and 6 low-molecular weight proteins (UQCRH/QCR6, UQCRB/QCR7, UQCRQ/QCR8, UQCR10/QCR9, UQCR11/QCR10 and a cleavage product of UQCRFS1). This cytochrome bc1 complex then forms a dimer. It depends on heme b as a cofactor.

The protein resides in the mitochondrion inner membrane. In terms of biological role, component of the ubiquinol-cytochrome c reductase complex (complex III or cytochrome b-c1 complex) that is part of the mitochondrial respiratory chain. The b-c1 complex mediates electron transfer from ubiquinol to cytochrome c. Contributes to the generation of a proton gradient across the mitochondrial membrane that is then used for ATP synthesis. This is Cytochrome b (MT-CYB) from Akodon boliviensis (Bolivian grass mouse).